The following is a 610-amino-acid chain: UvrABC system protein C (610 aa).

Residues 16–94 (SQPGVYRMYD…IKLYQPRYNV (79 aa)) form the GIY-YIG domain. Positions 204–239 (DQVLTQLIARMEKASQNLEFEEAARIRDQIQAVRRV) constitute a UVR domain.

This sequence belongs to the UvrC family. As to quaternary structure, interacts with UvrB in an incision complex.

It is found in the cytoplasm. In terms of biological role, the UvrABC repair system catalyzes the recognition and processing of DNA lesions. UvrC both incises the 5' and 3' sides of the lesion. The N-terminal half is responsible for the 3' incision and the C-terminal half is responsible for the 5' incision. This is UvrABC system protein C from Escherichia fergusonii (strain ATCC 35469 / DSM 13698 / CCUG 18766 / IAM 14443 / JCM 21226 / LMG 7866 / NBRC 102419 / NCTC 12128 / CDC 0568-73).